Reading from the N-terminus, the 519-residue chain is Cilia- and flagella-associated protein 53 (519 aa).

Coiled-coil stretches lie at residues 80–107 (NRHL…LLES) and 210–339 (LAKE…QEEQ). A disordered region spans residues 498 to 519 (TTAVHPFRRRDRRCSSSGGQMS).

The protein belongs to the CFAP53 family.

Its subcellular location is the cytoplasm. It is found in the cytoskeleton. The protein resides in the cilium axoneme. The protein localises to the cilium basal body. In terms of biological role, microtubule inner protein (MIP) part of the dynein-decorated doublet microtubules (DMTs) in cilia axoneme, which is required for motile cilia beating. Regulates motility patterns of both 9+0 and 9+2 motile cilia through differential localization and recruitment of axonemal dynein components. Required for cilium motility within the spinal canal and Kuppfer's vesicle and is involved in the establishment of left-right symmetry during embryogenesis. The polypeptide is Cilia- and flagella-associated protein 53 (Danio rerio (Zebrafish)).